A 458-amino-acid polypeptide reads, in one-letter code: MSFDFIKDKNKHIHFIGIGGISMSGLAEILLYNNFSISGSDMNSSPITEKLKDKGAKIYIGHKKENVKDADLIVYTAAIASDNPEITKAKEKNIKLMDRADFLGNLMKGYKYNIAISGTHGKTTTTSMLSHVALKANVDPTILVGGNLDIINGNVRVGESDFFITEACEYKSSFLKFFPYIGVILNIDADHLDYYKDLDDIKNAFSKFIKLIPKDGYLVAYGEDKNIQSIIKEASCNVITYGINSGDIQAHNIEYDEKACGNFDVVKDNQKLFSVKLNVPGKHNILNSLASICIGLASNMKDKDIIEGIESFFGTHRRFELKGCKNNITVIDDYAHHPTEISATLDAAKKYPHNKLFCVFQPHTYSRTLTLFDDFTKCFDNADEIILADIYAAREKDTGIISSDMLGDKLRDRGLKCTNFHKFDDIKNYLIENTKDGDLILTVGAGDIYKVGEMYINL.

118-124 (GTHGKTT) serves as a coordination point for ATP.

It belongs to the MurCDEF family.

It is found in the cytoplasm. It catalyses the reaction UDP-N-acetyl-alpha-D-muramate + L-alanine + ATP = UDP-N-acetyl-alpha-D-muramoyl-L-alanine + ADP + phosphate + H(+). The protein operates within cell wall biogenesis; peptidoglycan biosynthesis. In terms of biological role, cell wall formation. The chain is UDP-N-acetylmuramate--L-alanine ligase from Clostridium botulinum (strain ATCC 19397 / Type A).